The primary structure comprises 66 residues: Small ribosomal subunit protein bS21 (66 aa).

It belongs to the bacterial ribosomal protein bS21 family.

The sequence is that of Small ribosomal subunit protein bS21 from Solidesulfovibrio magneticus (strain ATCC 700980 / DSM 13731 / RS-1) (Desulfovibrio magneticus).